Consider the following 431-residue polypeptide: Chaperone SurA (431 aa).

Residues 1 to 20 form the signal peptide; sequence MKNWRTFILGLALCANGALA. PpiC domains lie at 171-272 and 282-382; these read GAEF…KVND and VTEV…QLID.

It is found in the periplasm. The enzyme catalyses [protein]-peptidylproline (omega=180) = [protein]-peptidylproline (omega=0). Functionally, chaperone involved in the correct folding and assembly of outer membrane proteins. Recognizes specific patterns of aromatic residues and the orientation of their side chains, which are found more frequently in integral outer membrane proteins. May act in both early periplasmic and late outer membrane-associated steps of protein maturation. The polypeptide is Chaperone SurA (Sodalis glossinidius (strain morsitans)).